A 226-amino-acid polypeptide reads, in one-letter code: 6-deoxy-6-sulfo-D-fructose transaldolase (226 aa).

Residue Lys-89 is the Schiff-base intermediate with substrate of the active site.

This sequence belongs to the transaldolase family.

It carries out the reaction 6-deoxy-6-sulfo-D-fructose + D-glyceraldehyde 3-phosphate = D-fructose 6-phosphate + (2S)-3-sulfolactaldehyde. The enzyme catalyses 6-deoxy-6-sulfo-D-fructose + D-erythrose 4-phosphate = (2S)-3-sulfolactaldehyde + D-sedoheptulose 7-phosphate. Part of the sulfo-TAL (or sulfo-SFT) pathway, a D-sulfoquinovose degradation pathway that produces sulfolactate (SL). Catalyzes the conversion of 6-deoxy-6-sulfo-D-fructose (SF) and glyceraldehyde 3-phosphate (GAP) into fructose-6-phosphate (F6P) and 3-sulfolactaldehyde (SLA). Can also catalyze the SF-cleavage with erythrose 4-phosphate (E4P) as acceptor, forming 3-sulfolactaldehyde (SLA) and sedoheptulose 7-phosphate (S7P). The polypeptide is 6-deoxy-6-sulfo-D-fructose transaldolase (Priestia aryabhattai (Bacillus aryabhattai)).